Consider the following 521-residue polypeptide: tRNA (adenine(58)-N(1))-methyltransferase non-catalytic subunit trm6 (521 aa).

3 disordered regions span residues 1–24 (METE…NNNN), 305–336 (IYDK…AKTI), and 452–521 (QKST…KIDE). The segment covering 12–24 (KSTTSNTNDNNNN) has biased composition (low complexity). Residues 308–334 (KQVKEKEKEKEKDENVKDEKESGEEAK) are compositionally biased toward basic and acidic residues. 2 stretches are compositionally biased toward low complexity: residues 452–476 (QKST…TKTT) and 487–502 (DATT…AATT). Positions 510-521 (SESALKKRKIDE) are enriched in basic and acidic residues.

The protein belongs to the TRM6/GCD10 family. In terms of assembly, heterotetramer; composed of two copies of trmt6 and two copies of trmt61a.

It is found in the nucleus. In terms of biological role, substrate-binding subunit of tRNA (adenine-N(1)-)-methyltransferase, which catalyzes the formation of N(1)-methyladenine at position 58 (m1A58) in initiator methionyl-tRNA. The polypeptide is tRNA (adenine(58)-N(1))-methyltransferase non-catalytic subunit trm6 (trmt6) (Dictyostelium discoideum (Social amoeba)).